Here is a 443-residue protein sequence, read N- to C-terminus: Protein translocase subunit SecY (443 aa).

Transmembrane regions (helical) follow at residues 24 to 44 (LFVI…IPGI), 77 to 97 (IFAL…LLTV), 125 to 145 (LVLA…MPGM), 154 to 174 (FAFY…LMWL), 183 to 203 (IGNG…PPAI), 217 to 237 (FLVL…VVFV), 274 to 294 (VIPA…ASWF), 317 to 337 (YVLL…ALVF), 370 to 390 (MTRL…IPEF), and 397 to 417 (VPFY…MDFM).

This sequence belongs to the SecY/SEC61-alpha family. In terms of assembly, component of the Sec protein translocase complex. Heterotrimer consisting of SecY, SecE and SecG subunits. The heterotrimers can form oligomers, although 1 heterotrimer is thought to be able to translocate proteins. Interacts with the ribosome. Interacts with SecDF, and other proteins may be involved. Interacts with SecA.

It localises to the cell inner membrane. Its function is as follows. The central subunit of the protein translocation channel SecYEG. Consists of two halves formed by TMs 1-5 and 6-10. These two domains form a lateral gate at the front which open onto the bilayer between TMs 2 and 7, and are clamped together by SecE at the back. The channel is closed by both a pore ring composed of hydrophobic SecY resides and a short helix (helix 2A) on the extracellular side of the membrane which forms a plug. The plug probably moves laterally to allow the channel to open. The ring and the pore may move independently. This chain is Protein translocase subunit SecY, found in Escherichia coli O157:H7.